The chain runs to 83 residues: Small ribosomal subunit protein bS20 (83 aa).

The protein belongs to the bacterial ribosomal protein bS20 family.

Binds directly to 16S ribosomal RNA. This is Small ribosomal subunit protein bS20 from Lactobacillus delbrueckii subsp. bulgaricus (strain ATCC 11842 / DSM 20081 / BCRC 10696 / JCM 1002 / NBRC 13953 / NCIMB 11778 / NCTC 12712 / WDCM 00102 / Lb 14).